Consider the following 336-residue polypeptide: Toluate 1,2-dioxygenase electron transfer component (336 aa).

Residues 3–97 (HKVATDFEDG…DCVIRVPAAS (95 aa)) enclose the 2Fe-2S ferredoxin-type domain. Residues C40, C45, C48, and C81 each contribute to the [2Fe-2S] cluster site. The interval 99-336 (VCKTQQAGYQ…FYYEKFAASA (238 aa)) is ferredoxin-reductase. In terms of domain architecture, FAD-binding FR-type spans 104-204 (QAGYQAAISN…AGPLGAFYLR (101 aa)).

This sequence belongs to the bacterial ring-hydroxylating dioxygenase ferredoxin reductase family. As to quaternary structure, this dioxygenase system consists of three proteins: the two subunits of the hydroxylase component (XylX and XylY), and an electron transfer component (XylZ). It depends on FAD as a cofactor. [2Fe-2S] cluster is required as a cofactor.

It catalyses the reaction 2 reduced [2Fe-2S]-[ferredoxin] + NAD(+) + H(+) = 2 oxidized [2Fe-2S]-[ferredoxin] + NADH. In terms of biological role, electron transfer component of toluate 1,2-dioxygenase system. This is Toluate 1,2-dioxygenase electron transfer component (xylZ) from Pseudomonas putida (Arthrobacter siderocapsulatus).